Consider the following 883-residue polypeptide: Sodium/sulfate cotransporter 2 (883 aa).

The next 6 helical transmembrane spans lie at 3 to 23, 30 to 50, 60 to 80, 106 to 126, 139 to 159, and 185 to 205; these read FGWQGSVSIAFTALAFVVMAA, VTFTVLLAFLTAFDGQIVTVA, GLLTVIFLYWVAEGITQTGGL, MCLSAFLNNTPCVTFMIPILI, LLIPLSYASVLGGTCTSIGTS, and IFDIAPYGVPYALWGFVFILL. 4 consecutive RCK C-terminal domains span residues 211–295, 317–401, 406–491, and 497–583; these read LPGN…EFGL, VFTP…SKNN, VRAV…FPGL, and EQVD…DKSF. The next 6 membrane-spanning stretches (helical) occupy residues 600 to 620, 624 to 644, 657 to 677, 693 to 713, 774 to 794, and 802 to 822; these read MVIGVLLATGMVLTQIVGGLK, YIHLWPAAVLTSALMLLTGCM, VYLTIAAAFGVSAALEGTGVA, SDGAALIAIYIATAMLSELLT, FAIIGAPFQIWLMIVAGFILC, and VWIVSWICTAGIVLLPALYFL. The segment at 857 to 883 is disordered; that stretch reads QASRTGSDGTGSSDSPRALGVPKVITA. A compositionally biased stretch (low complexity) spans 861–871; it reads TGSDGTGSSDS.

Belongs to the divalent anion:Na+ symporter (DASS) superfamily. Na+/sulfate symporter (TC 2.A.47.4) family.

It is found in the cell membrane. In terms of biological role, na(+)/sulfate cotransporter with a probable high-affinity for sulfate and a proteasome dependent turnover. The sequence is that of Sodium/sulfate cotransporter 2 (SLT2) from Chlamydomonas reinhardtii (Chlamydomonas smithii).